Consider the following 282-residue polypeptide: Small ribosomal subunit protein uS2 (282 aa).

Residues 260 to 282 (KRRRSKVYKEEEREVVTNEDESR) form a disordered region. Positions 266 to 282 (VYKEEEREVVTNEDESR) are enriched in basic and acidic residues.

Belongs to the universal ribosomal protein uS2 family.

In Wolbachia pipientis wMel, this protein is Small ribosomal subunit protein uS2.